Here is a 434-residue protein sequence, read N- to C-terminus: Trigger factor (434 aa).

One can recognise a PPIase FKBP-type domain in the interval 161–246; it reads EDRATLDFTG…LKKVEVRELP (86 aa).

It belongs to the FKBP-type PPIase family. Tig subfamily.

It is found in the cytoplasm. The enzyme catalyses [protein]-peptidylproline (omega=180) = [protein]-peptidylproline (omega=0). In terms of biological role, involved in protein export. Acts as a chaperone by maintaining the newly synthesized protein in an open conformation. Functions as a peptidyl-prolyl cis-trans isomerase. In Yersinia enterocolitica serotype O:8 / biotype 1B (strain NCTC 13174 / 8081), this protein is Trigger factor.